Here is a 348-residue protein sequence, read N- to C-terminus: UDP-N-acetylglucosamine--N-acetylmuramyl-(pentapeptide) pyrophosphoryl-undecaprenol N-acetylglucosamine transferase (348 aa).

UDP-N-acetyl-alpha-D-glucosamine is bound by residues 11-13, asparagine 120, arginine 161, serine 187, and glutamine 281; that span reads TGG.

This sequence belongs to the glycosyltransferase 28 family. MurG subfamily.

The protein resides in the cell inner membrane. It carries out the reaction di-trans,octa-cis-undecaprenyl diphospho-N-acetyl-alpha-D-muramoyl-L-alanyl-D-glutamyl-meso-2,6-diaminopimeloyl-D-alanyl-D-alanine + UDP-N-acetyl-alpha-D-glucosamine = di-trans,octa-cis-undecaprenyl diphospho-[N-acetyl-alpha-D-glucosaminyl-(1-&gt;4)]-N-acetyl-alpha-D-muramoyl-L-alanyl-D-glutamyl-meso-2,6-diaminopimeloyl-D-alanyl-D-alanine + UDP + H(+). It functions in the pathway cell wall biogenesis; peptidoglycan biosynthesis. Functionally, cell wall formation. Catalyzes the transfer of a GlcNAc subunit on undecaprenyl-pyrophosphoryl-MurNAc-pentapeptide (lipid intermediate I) to form undecaprenyl-pyrophosphoryl-MurNAc-(pentapeptide)GlcNAc (lipid intermediate II). This is UDP-N-acetylglucosamine--N-acetylmuramyl-(pentapeptide) pyrophosphoryl-undecaprenol N-acetylglucosamine transferase from Crocosphaera subtropica (strain ATCC 51142 / BH68) (Cyanothece sp. (strain ATCC 51142)).